The chain runs to 1098 residues: MLNGLTRVSTSSELESILDIVQSSGEIAVVFISPSIGDLETITSETQRRQLRIAGIPRGGYTILPAIPLYDDELLQMCERYTAANDYEKAQIRDSLFMREYPLFAYSVRNHKALFHPADYVSRILQFCSYYVQAPDADVLSLLDRSPFLHISPIKEICTHIRLIARGTPLAPEDSESPAPEQLRFHAESDAEKLAAERAGAMSIATSSGGASETEQLSLFSGVVPSALFQKDAVEEVDKDTEETMVDLTGEETVDAVHSFQAEYLTLDGLELVTKAAIFYDREGEGQRIVAVYIPGGVPEDTCRAAAAVLEPAATKKNLRALTNGGLPPDTGLVGYYDYLTNPTRHKCRETEFSRRNWGLLAQSEPLLKHLDKLYSQLAPMHHHLQKVAIPSQYQLCGTVFSTITVNRNFRTAVHTDKGDFRSGLGVLSVINGEFEGCHLAIKKLKKAFQLKVGDVLLFDTSLEHGNTEVINPEIHWQRTSIVCYLRTGLMSSVCEMERRKHLNRLILQQLRNTEVLNTTVNINGADSSLPPLFVPTRLASHLAPVQLAALGFIVERTEKQSGCVVAMTMGLGKTLVALTLCFSQLHLAPQADILILTPKPIISHWVDEKNKWAMHGLHFPHFVASDGLNSLEFEQQLLEYERQKNNEKPKLGHVFVINGEYLAGFLRRFKRFTPLLIIVDEGHRVAAKGNKLTESLDRLRCNLRIVLSGTPLQNDASELYRLVGWVNKGVGRVLPPKRFQELANDINQFVEGDDGAFYNAVMAQEYIQDWMRGFVFREMENDLPPLHDYLLICGSSDVQREYEEKLGLTETTMTALKATEHRPHHLSTHPACYLAFISDSYQSMVSGWTVRAQANTSRMRVSQLEEIDTMRLEHYVQMVENEQLDTFIDLSGKMRVLVDIVLRVQARKEKLIIFSLYVGSQDLIHRTLTALRVCTFTVRGRDSQDRRRRAMQEFSENKDLIVLVLSTKIAAYGLDFTAANHVVLFDSWWNPQVDAQAIARAYRRNQRKPVTVYRLISATENKFVLSSQTRKIALFKCILHERTSRQALPDELEDCAANEKDEERRSFWAKLKTTLLAGGTRALLNVYRYQESVRESE.

Positions 1–540 (MLNGLTRVST…PPLFVPTRLA (540 aa)) are thymine dioxygenase. Fe cation-binding residues include His-415, Asp-417, and His-465. Residue Arg-479 coordinates 2-oxoglutarate. The DNA Helicase stretch occupies residues 541–1098 (SHLAPVQLAA…RYQESVRESE (558 aa)). A Helicase ATP-binding domain is found at 555–730 (VERTEKQSGC…YRLVGWVNKG (176 aa)). An ATP-binding site is contributed by 568–575 (MTMGLGKT). Positions 681 to 684 (DEGH) match the DEAH box motif. The region spanning 897-1057 (VLVDIVLRVQ…ALPDELEDCA (161 aa)) is the Helicase C-terminal domain.

In the C-terminal section; belongs to the SNF2/RAD54 helicase family. This sequence in the N-terminal section; belongs to the TET family. JBP2 subfamily. Fe(2+) is required as a cofactor.

The protein resides in the nucleus. It catalyses the reaction ATP + H2O = ADP + phosphate + H(+). The catalysed reaction is thymine + 2-oxoglutarate + O2 = 5-hydroxymethyluracil + succinate + CO2. In terms of biological role, dioxygenase that catalyzes the first step of DNA base J (beta-d-glucosyl-HOMedU) biosynthesis by converting thymine to 5-hydroxymethyluracil (HOMedU). DNA base J is a hypermodified thymidine residue found in the genome of kinetoplastid parasites, which is localized primarily to repetitive DNA, namely the telomeres, and is implicated in the regulation of antigenic variation. Probably also acts as a DNA helicase. Recognizes and binds specific regions of the genome, hydrolyzes ATP and allows the DNA base J de novo synthesis. Involved in initial synthesis of DNA base J, JBP1 being able to act via the basal level of DNA base J and propagate further synthesis. In contrast to JBP1, it does not specifically bind DNA base J, however it binds chromatin. This chain is Bifunctional helicase and thymine dioxygenase JBP2 (JBP2), found in Leishmania tarentolae (Sauroleishmania tarentolae).